The primary structure comprises 864 residues: MNYQQQLANSAAIRAEIQRFESVHPNIYSIYELLERLDEPVLQNQIREHVIAIEDAFVNSQEWTLSRSVPELKVGIVGNLASGKSALVHRYLTGTYVQEESPEGGRFKKEIVVDGQSYLLLIRDEGGPPEAQFAMWVDAVIFVFSLEDEISFQTVYHYYSRLANYRNTSEIPMVLVGTQDAISGSNPRVIDDSRARKLSNDLKRCTYYETCATYGLNVERVFQDVAQKIVATRKKQQLSIGPCKSLPNSPSHTSVCSTQVSAVHISQTSNGGGSLSDYSSSVPSTPSTSQKELRIDVPPAASTPTPVRKQSKRRSNLFTSRKGSDPDKDKKGLESRADSIGSGRAIPIKQGMLLKRSGKSLNKEWKKKYVTLSDNGVLTYHPSLHDYMQNVHGKEIDLLRTTVKVPGKRPPRATSSCAPVASPKTNGLTKEVSGLQISPNTGNVTSSTSVTQMASGPSGISLGSFSRMDGMHQRSYSVSSADQWSEGAVITNSAISSDTGLGDSVCSSPSISSTTSPKLDPPPSPHANRKKHRRKKSTSNFKVDGLSSTAEEQEENFEFIIVSLTSQSWHFEATSYEERDAWVQAIESQILASLQSCESSKNKSRLTSQNEALALQSIRNLPGNSHCVDCDAQSPDWASLNLGALMCIECSGIHRNLGTHLSRVRSLDLDDWPPELIKVMSAIGNELANSVWEGSSQGHVKPCSESPREEKERWIRAKYEQRLFLSPLPCRDLPLGQQLLRATAEEDLRAVILLLAHGSREEVNETCGEGDRRTSLHLACRKGNVVLVQLLIWYGVDVMARDFHGNTALAYAKQAVTSEVRELLLQYGCPDEQFVLMATPNLSRKNNRNNNSNAGGSGLMPTLI.

The small GTPase-like stretch occupies residues 66–276 (SRSVPELKVG…QTSNGGGSLS (211 aa)). A GLD domain is found at 67-241 (RSVPELKVGI…TRKKQQLSIG (175 aa)). Residues 78–85 (GNLASGKS), 122–126 (IRDEG), and 178–181 (TQDA) contribute to the GTP site. Disordered regions lie at residues 266-343 (SQTS…IGSG), 405-455 (VPGK…QMAS), and 499-549 (TGLG…LSST). The span at 275–289 (LSDYSSSVPSTPSTS) shows a compositional bias: low complexity. Positions 322–337 (KGSDPDKDKKGLESRA) are enriched in basic and acidic residues. Residues 346 to 591 (IPIKQGMLLK…WVQAIESQIL (246 aa)) form the PH domain. Polar residues predominate over residues 413-428 (ATSSCAPVASPKTNGL). Residues 507–517 (SSPSISSTTSP) show a composition bias toward low complexity. Residues 527–537 (ANRKKHRRKKS) show a composition bias toward basic residues. Residues 538-549 (TSNFKVDGLSST) show a composition bias toward polar residues. One can recognise an Arf-GAP domain in the interval 612–732 (ALALQSIRNL…LFLSPLPCRD (121 aa)). The segment at 627–650 (CVDCDAQSPDWASLNLGALMCIEC) adopts a C4-type zinc-finger fold. ANK repeat units follow at residues 771-800 (DRRTSLHLACRKGNVVLVQLLIWYGVDVMA) and 804-833 (HGNTALAYAKQAVTSEVRELLLQYGCPDEQ). Residues 845 to 854 (KNNRNNNSNA) show a composition bias toward low complexity. The interval 845–864 (KNNRNNNSNAGGSGLMPTLI) is disordered.

Belongs to the centaurin gamma-like family. In terms of assembly, homodimer. Interacts with several subunits of the AP-3 protein complex.

It is found in the cytoplasm. GTPase-activating protein. Directly and specifically regulates the adapter protein 3 (AP-3)-dependent trafficking of proteins in the endosomal-lysosomal system. This is Arf-GAP with GTPase, ANK repeat and PH domain-containing protein 1 (agap1) from Xenopus laevis (African clawed frog).